A 398-amino-acid chain; its full sequence is Cytochrome b (398 aa).

A run of 4 helical transmembrane segments spans residues 33–53, 77–98, 113–133, and 178–198; these read FGSL…FLAM, WLIR…YLHI, WNIG…GYVL, and FFAF…IHLL. The heme b site is built by H83 and H97. Heme b-binding residues include H182 and H196. A ubiquinone is bound at residue H201. Transmembrane regions (helical) follow at residues 226–246, 288–308, 320–340, and 347–367; these read YKDL…SLFA, LGGV…PILH, FTQL…WIGG, and YVVI…FLIP.

Belongs to the cytochrome b family. As to quaternary structure, the cytochrome bc1 complex contains 3 respiratory subunits (MT-CYB, CYC1 and UQCRFS1), 2 core proteins (UQCRC1 and UQCRC2) and probably 6 low-molecular weight proteins. Heme b is required as a cofactor.

The protein localises to the mitochondrion inner membrane. In terms of biological role, component of the ubiquinol-cytochrome c reductase complex (complex III or cytochrome b-c1 complex) that is part of the mitochondrial respiratory chain. The b-c1 complex mediates electron transfer from ubiquinol to cytochrome c. Contributes to the generation of a proton gradient across the mitochondrial membrane that is then used for ATP synthesis. The chain is Cytochrome b (mt-cyb) from Channa asiatica (Small snakehead).